A 933-amino-acid polypeptide reads, in one-letter code: Valine--tRNA ligase (933 aa).

Positions 58–68 (PNVTGSLHMGH) match the 'HIGH' region motif. A 'KMSKS' region motif is present at residues 556 to 560 (KMSKS). Lys559 provides a ligand contact to ATP. Coiled coils occupy residues 807–833 (VTKNQNLLNLLKKATQDIQALTRANKV) and 864–933 (EGLV…LGLK).

This sequence belongs to the class-I aminoacyl-tRNA synthetase family. ValS type 1 subfamily. In terms of assembly, monomer.

The protein localises to the cytoplasm. It catalyses the reaction tRNA(Val) + L-valine + ATP = L-valyl-tRNA(Val) + AMP + diphosphate. Catalyzes the attachment of valine to tRNA(Val). As ValRS can inadvertently accommodate and process structurally similar amino acids such as threonine, to avoid such errors, it has a 'posttransfer' editing activity that hydrolyzes mischarged Thr-tRNA(Val) in a tRNA-dependent manner. This is Valine--tRNA ligase from Prochlorococcus marinus (strain SARG / CCMP1375 / SS120).